A 372-amino-acid polypeptide reads, in one-letter code: MGAQAPLRLPAAPPLAVCGYTSVLLLFAFCLPGSRASNQPAGGGGDCPGGRGKSNCSELNLRESDIRVCDESSCKYGGVCKEDGDGLKCACQFQCHTNYIPVCGSNGDTYQNECFLRRAACKHQKDITVVARGPCYSDNGSGSGEGEEEGSGAGAHRKHSKCGPCKYKAECDEDAENVGCVCNIDCSGYSFNPVCASDGSSYNNPCFVREASCIKQEQIDIRHLGHCTDTDDVSLLGKKDDGLQYRPDVKDAGDEREDVYIGSHMPCPENLNGYCIHGKCEFIYSTQKASCRCESGYTGQHCEKTDFSILYVVPSRQKLTHVLIAAIIGAVQIAIIVAIVMCITRKCPKNNRGRRQKQNLGHFTSDTSSRMV.

The N-terminal stretch at 1–36 (MGAQAPLRLPAAPPLAVCGYTSVLLLFAFCLPGSRA) is a signal peptide. At 37–322 (SNQPAGGGGD…VPSRQKLTHV (286 aa)) the chain is on the extracellular side. N-linked (GlcNAc...) asparagine glycosylation is present at Asn55. The region spanning 90–137 (ACQFQCHTNYIPVCGSNGDTYQNECFLRRAACKHQKDITVVARGPCYS) is the Kazal-like 1 domain. 3 cysteine pairs are disulfide-bonded: Cys91–Cys121, Cys95–Cys114, and Cys103–Cys135. Asn139 carries N-linked (GlcNAc...) asparagine glycosylation. Residues 139-161 (NGSGSGEGEEEGSGAGAHRKHSK) form a disordered region. The 49-residue stretch at 181-229 (VCNIDCSGYSFNPVCASDGSSYNNPCFVREASCIKQEQIDIRHLGHCTD) folds into the Kazal-like 2 domain. Cystine bridges form between Cys182-Cys213, Cys186-Cys206, Cys195-Cys227, Cys267-Cys280, Cys275-Cys291, and Cys293-Cys302. Positions 263–303 (SHMPCPENLNGYCIHGKCEFIYSTQKASCRCESGYTGQHCE) constitute an EGF-like domain. A helical transmembrane segment spans residues 323-343 (LIAAIIGAVQIAIIVAIVMCI). Residues 344-372 (TRKCPKNNRGRRQKQNLGHFTSDTSSRMV) are Cytoplasmic-facing. Residues 351–372 (NRGRRQKQNLGHFTSDTSSRMV) are disordered. The segment covering 358-372 (QNLGHFTSDTSSRMV) has biased composition (polar residues).

This sequence belongs to the tomoregulin family. In terms of assembly, may interact with ST14. In terms of tissue distribution, maily expressed in neurons. Expressed in brain, neurointermediate lobe, pars distalis, pancreas, ovary and testis.

The protein localises to the cell membrane. Functionally, neuron-specific restriction factor that prevents herpes simplex virus 1 (HHV-1) infection in the brain by blocking viral entry. Also able to restrict herpes simplex virus 2 (HHV-2) infection, although to a lesser extent. Acts by preventing the association between the viral glycoprotein D (gD) and its cell surface receptor NECTIN1, thereby inhibiting fusion of the virus and the cell membrane. Also able to prevent the association between the viral glycoprotein B (gB) and MYH9/NMMHC-IIA and MYH10/NMMHC-IIB receptors. In Mus musculus (Mouse), this protein is Tomoregulin-1.